The chain runs to 537 residues: Small conductance calcium-activated potassium channel protein 1 (537 aa).

The segment covering 1–10 has biased composition (polar residues); sequence MSSHSHNGSV. Residues 1–90 are disordered; that stretch reads MSSHSHNGSV…GKPPTVSHRL (90 aa). Residues 65–76 are compositionally biased toward acidic residues; it reads QEEEEEEEEEED. Residues 108 to 128 form a helical membrane-spanning segment; it reads LIFGMFGIVVMVTETELSWGV. The chain crosses the membrane as a helical span at residues 137–157; the sequence is FALKCLISLSTVILLGLVILY. A helical transmembrane segment spans residues 176–196; the sequence is IAMTWERVSLISLELVVCAIH. A helical transmembrane segment spans residues 225 to 245; that stretch reads VLLSIPMFLRLYLLARVMLLH. A helical transmembrane segment spans residues 274–294; the sequence is LMTICPGTVLLVFSVSSWIVA. The segment at residues 314–334 is an intramembrane region (pore-forming); that stretch reads FLGAMWLISITFLSIGYGDMV. Positions 343 to 363 are segment S6; sequence VCLLTGIMGAGCTALVVAVVA. The segment at 381-460 is calmodulin-binding; the sequence is DTQLTKRVKN…LAELAKAQSI (80 aa).

This sequence belongs to the potassium channel KCNN family. KCa2.1/KCNN1 subfamily. In terms of assembly, homodimer. Heteromultimer with KCNN2 and KCNN3. The complex is composed of 4 channel subunits each of which binds to a calmodulin subunit which regulates the channel activity through calcium-binding. Interacts with calmodulin. As to expression, highest expression in brain and liver with lower levels in heart, testis, kidney and colon. In colon, detected in smooth muscle cells. Expressed in atrial and ventricular myocytes with higher levels in atrial myocytes.

The protein resides in the membrane. Its subcellular location is the cytoplasm. It is found in the myofibril. The protein localises to the sarcomere. It localises to the z line. It catalyses the reaction K(+)(in) = K(+)(out). Inhibited by bee venom neurotoxin apamin. Inhibited by d-tubocurarine and tetraethylammonium (TEA). In terms of biological role, small conductance calcium-activated potassium channel that mediates the voltage-independent transmembrane transfer of potassium across the cell membrane through a constitutive interaction with calmodulin which binds the intracellular calcium allowing its opening. The current is characterized by a voltage-independent activation, an intracellular calcium concentration increase-dependent activation and a single-channel conductance of about 3 picosiemens. Also presents an inwardly rectifying current, thus reducing its already small outward conductance of potassium ions, which is particularly the case when the membrane potential displays positive values, above + 20 mV. Activation is followed by membrane hyperpolarization. Thought to regulate neuronal excitability by contributing to the slow component of synaptic afterhyperpolarization. The polypeptide is Small conductance calcium-activated potassium channel protein 1 (Mus musculus (Mouse)).